The primary structure comprises 411 residues: Heterogeneous nuclear ribonucleoprotein 1 (411 aa).

The 77-residue stretch at 6 to 82 folds into the RRM 1 domain; that stretch reads GKLFVGGISW…REVDVKRAMS (77 aa). Disordered regions lie at residues 81 to 103, 183 to 221, and 358 to 411; these read MSREEQQVSGRTGNLNTSRSSGG, KRALPKDANPGGGGRSMGGGGSGGYQGYGGNESSYDGRM, and AAYG…RQGQ. Positions 87–101 are enriched in polar residues; that stretch reads QVSGRTGNLNTSRSS. The 78-residue stretch at 110 to 187 folds into the RRM 2 domain; it reads KKIFVGGLPP…KQVEVKRALP (78 aa). Gly residues-rich tracts occupy residues 192-212, 362-387, and 397-411; these read PGGGGRSMGGGGSGGYQGYGG, VVGGRPSGGGSNNPGSGGYMGGGYGD, and GYGGGYNDGQGRQGQ. The nuclear targeting sequence (M9) stretch occupies residues 341-390; it reads GYGYGGYSGSDSGYGNQAAYGVVGGRPSGGGSNNPGSGGYMGGGYGDGSW.

As to quaternary structure, component of the spliceosome. Interacts with TRN1.

Its subcellular location is the nucleus. The protein resides in the cytoplasm. Its function is as follows. Involved with pre-mRNA processing. Forms complexes (ribonucleosomes) with at least 20 other different hnRNP and heterogeneous nuclear RNA in the nucleus. In terms of biological role, involved in the packaging of pre-mRNA into hnRNP particles, transport of poly(A) mRNA from the nucleus to the cytoplasm and may modulate splice site selection. The sequence is that of Heterogeneous nuclear ribonucleoprotein 1 (RNP1) from Arabidopsis thaliana (Mouse-ear cress).